The primary structure comprises 175 residues: NADH-quinone oxidoreductase subunit B (175 aa).

Residues Cys-49, Cys-50, Cys-115, and Cys-145 each contribute to the [4Fe-4S] cluster site.

The protein belongs to the complex I 20 kDa subunit family. In terms of assembly, NDH-1 is composed of 14 different subunits. Subunits NuoB, C, D, E, F, and G constitute the peripheral sector of the complex. [4Fe-4S] cluster is required as a cofactor.

It is found in the cell membrane. The catalysed reaction is a quinone + NADH + 5 H(+)(in) = a quinol + NAD(+) + 4 H(+)(out). Functionally, NDH-1 shuttles electrons from NADH, via FMN and iron-sulfur (Fe-S) centers, to quinones in the respiratory chain. The immediate electron acceptor for the enzyme in this species is believed to be a menaquinone. Couples the redox reaction to proton translocation (for every two electrons transferred, four hydrogen ions are translocated across the cytoplasmic membrane), and thus conserves the redox energy in a proton gradient. The sequence is that of NADH-quinone oxidoreductase subunit B from Heliobacterium modesticaldum (strain ATCC 51547 / Ice1).